The chain runs to 160 residues: UPF0178 protein BPP1051 (160 aa).

This sequence belongs to the UPF0178 family.

In Bordetella parapertussis (strain 12822 / ATCC BAA-587 / NCTC 13253), this protein is UPF0178 protein BPP1051.